The primary structure comprises 405 residues: MPEPVAEPALNGLRLNLRIVSIVMFNFASYLTIGLPLAVLPGYVHDAMGFSAFWAGLIISLQYFATLLSRPHAGRYADVLGPKKIVVFGLCGCFLSGFGYLLADIASAWPMISLLLLGLGRVILGIGQSFAGTGSTLWGVGVVGSLHIGRVISWNGIVTYGAMAMGAPLGVLCYAWGGLQGLALTVMGVALLAILLALPRPSVKANKGKPLPFRAVLGRVWLYGMALALASAGFGVIATFITLFYDAKGWDGAAFALTLFSVAFVGTRLLFPNGINRLGGLNVAMICFGVEIIGLLLVGTAAMPWMAKIGVLLTGMGFSLVFPALGVVAVKAVPPQNQGAALATYTVFMDMSLGVTGPLAGLVMTWAGVPVIYLAAAGLVAMALLLTWRLKKRPPSALPEAASSS.

Helical transmembrane passes span 19-39 (IVSI…PLAV), 48-68 (MGFS…ATLL), 85-105 (IVVF…LADI), 106-126 (ASAW…ILGI), 129-149 (SFAG…LHIG), 156-176 (GIVT…CYAW), 178-198 (GLQG…LLAL), 224-244 (GMAL…ITLF), 252-272 (GAAF…LLFP), 283-303 (VAMI…TAAM), 309-329 (IGVL…GVVA), 344-364 (TYTV…GLVM), and 366-386 (WAGV…ALLL).

It belongs to the major facilitator superfamily. YhhS family.

It is found in the cell inner membrane. This is an uncharacterized protein from Salmonella paratyphi C (strain RKS4594).